Reading from the N-terminus, the 293-residue chain is MDKSTWTTKVGLAQMLKGGVIMDVVTPEQARIAEEAGAVAVMALERVPADIRAQGGVARMSDPELILAIKEAVTIPVMAKARIGHFVEAQVLEALGIDYIDESEVLTPADEEHHINKHKFRIPFVCGCRNLGEGLRRVAEGAAMLRTKGEAGTGNVVEAVRHARAVYSEIRRLQTMDEDELFTYAKNIQAPYELVRQVAESGRLPVVNFAAGGIATPADAALLMQLGVDGVFVGSGIFKSGDPARRARAIVAATTHYNEPEIIAEVSRGLGEAMVGIEIGKIPRDQLMAGRGW.

Aspartate 23 is a D-ribose 5-phosphate binding site. Lysine 80 serves as the catalytic Schiff-base intermediate with D-ribose 5-phosphate. Glycine 152 serves as a coordination point for D-ribose 5-phosphate. Arginine 164 lines the D-glyceraldehyde 3-phosphate pocket. Residues glycine 213 and 234–235 each bind D-ribose 5-phosphate; that span reads GS.

The protein belongs to the PdxS/SNZ family. In terms of assembly, in the presence of PdxT, forms a dodecamer of heterodimers.

The enzyme catalyses aldehydo-D-ribose 5-phosphate + D-glyceraldehyde 3-phosphate + L-glutamine = pyridoxal 5'-phosphate + L-glutamate + phosphate + 3 H2O + H(+). The protein operates within cofactor biosynthesis; pyridoxal 5'-phosphate biosynthesis. Catalyzes the formation of pyridoxal 5'-phosphate from ribose 5-phosphate (RBP), glyceraldehyde 3-phosphate (G3P) and ammonia. The ammonia is provided by the PdxT subunit. Can also use ribulose 5-phosphate and dihydroxyacetone phosphate as substrates, resulting from enzyme-catalyzed isomerization of RBP and G3P, respectively. In Roseiflexus castenholzii (strain DSM 13941 / HLO8), this protein is Pyridoxal 5'-phosphate synthase subunit PdxS.